We begin with the raw amino-acid sequence, 441 residues long: T-box transcription factor TBX20 (441 aa).

Residues 103 to 282 (LWDKFHDLGT…SNPFAKGFRD (180 aa)) constitute a DNA-binding region (T-box).

In terms of tissue distribution, expressed throughout all cardiac tissue during later stages of development. Also expressed in the cement gland, jugular vein, lung bud, cloacal aperture, rhombomeres 2, 4, 6 and 8 and in a subset of motor neurons.

It localises to the nucleus. Its function is as follows. Transcriptional regulator that may be involved in heart developmental processes. The polypeptide is T-box transcription factor TBX20 (tbx20) (Xenopus laevis (African clawed frog)).